We begin with the raw amino-acid sequence, 525 residues long: Chromosomal replication initiator protein DnaA (525 aa).

Residues 1–71 form a domain I, interacts with DnaA modulators region; it reads MNDFWQHCSA…ADLAREFWNT (71 aa). A domain II region spans residues 71 to 188; the sequence is TPIEVQFVLD…GEADSMYERS (118 aa). Residues 160–182 are disordered; the sequence is AAAGRRTWRPGPGAAPANGGEAD. Positions 169-181 are enriched in low complexity; that stretch reads PGPGAAPANGGEA. The tract at residues 189-405 is domain III, AAA+ region; that stretch reads KLNPVLTFDN…GALRKILAYS (217 aa). Positions 233, 235, 236, and 237 each coordinate ATP. The tract at residues 406–525 is domain IV, binds dsDNA; the sequence is KFHGREISIE…LHVLEQTLKG (120 aa).

Belongs to the DnaA family. In terms of assembly, oligomerizes as a right-handed, spiral filament on DNA at oriC.

It localises to the cytoplasm. Its function is as follows. Plays an essential role in the initiation and regulation of chromosomal replication. ATP-DnaA binds to the origin of replication (oriC) to initiate formation of the DNA replication initiation complex once per cell cycle. Binds the DnaA box (a 9 base pair repeat at the origin) and separates the double-stranded (ds)DNA. Forms a right-handed helical filament on oriC DNA; dsDNA binds to the exterior of the filament while single-stranded (ss)DNA is stabiized in the filament's interior. The ATP-DnaA-oriC complex binds and stabilizes one strand of the AT-rich DNA unwinding element (DUE), permitting loading of DNA polymerase. After initiation quickly degrades to an ADP-DnaA complex that is not apt for DNA replication. Binds acidic phospholipids. The protein is Chromosomal replication initiator protein DnaA of Burkholderia cenocepacia (strain ATCC BAA-245 / DSM 16553 / LMG 16656 / NCTC 13227 / J2315 / CF5610) (Burkholderia cepacia (strain J2315)).